Consider the following 138-residue polypeptide: Basic phospholipase A2 homolog Tpu-K49a (138 aa).

Positions 1-16 (MRTLWIMAVLLVGVEG) are cleaved as a signal peptide. Intrachain disulfides connect C42–C131, C44–C60, C59–C111, C65–C138, C66–C104, and C91–C102. An important for membrane-damaging activities in eukaryotes and bacteria; heparin-binding region spans residues 121–133 (KKERINTKIFCKK).

Monomer. Expressed by the venom gland.

The protein resides in the secreted. Functionally, snake venom phospholipase A2 homolog that lacks catalytic activity. Induces local edema a few hours after injection in the hind foot. Is myotoxic. A model of myotoxic mechanism has been proposed: an apo Lys49-PLA2 is activated by the entrance of a hydrophobic molecule (e.g. fatty acid) at the hydrophobic channel of the protein leading to a reorientation of a monomer. This reorientation causes a transition between 'inactive' to 'active' states, causing alignment of C-terminal and membrane-docking sites (MDoS) side-by-side and putting the membrane-disruption sites (MDiS) in the same plane, exposed to solvent and in a symmetric position for both monomers. The MDoS region stabilizes the toxin on membrane by the interaction of charged residues with phospholipid head groups. Subsequently, the MDiS region destabilizes the membrane with penetration of hydrophobic residues. This insertion causes a disorganization of the membrane, allowing an uncontrolled influx of ions (i.e. calcium and sodium), and eventually triggering irreversible intracellular alterations and cell death. The polypeptide is Basic phospholipase A2 homolog Tpu-K49a (Craspedocephalus puniceus (Flat-nosed pitviper)).